Reading from the N-terminus, the 153-residue chain is 6,7-dimethyl-8-ribityllumazine synthase 1 (153 aa).

5-amino-6-(D-ribitylamino)uracil-binding positions include phenylalanine 16, 47–49 (ALE), and 76–78 (MVI). 81 to 82 (ET) is a (2S)-2-hydroxy-3-oxobutyl phosphate binding site. Histidine 84 functions as the Proton donor in the catalytic mechanism. 5-amino-6-(D-ribitylamino)uracil is bound at residue asparagine 109. Arginine 123 is a (2S)-2-hydroxy-3-oxobutyl phosphate binding site.

Belongs to the DMRL synthase family.

It carries out the reaction (2S)-2-hydroxy-3-oxobutyl phosphate + 5-amino-6-(D-ribitylamino)uracil = 6,7-dimethyl-8-(1-D-ribityl)lumazine + phosphate + 2 H2O + H(+). It participates in cofactor biosynthesis; riboflavin biosynthesis; riboflavin from 2-hydroxy-3-oxobutyl phosphate and 5-amino-6-(D-ribitylamino)uracil: step 1/2. Its function is as follows. Catalyzes the formation of 6,7-dimethyl-8-ribityllumazine by condensation of 5-amino-6-(D-ribitylamino)uracil with 3,4-dihydroxy-2-butanone 4-phosphate. This is the penultimate step in the biosynthesis of riboflavin. The sequence is that of 6,7-dimethyl-8-ribityllumazine synthase 1 from Rhizobium meliloti (strain 1021) (Ensifer meliloti).